The primary structure comprises 56 residues: Large ribosomal subunit protein bL32 (56 aa).

Residues 1–37 form a disordered region; that stretch reads MAVQQNKKSRSKRGMRRSHDALSTAQLSVDATSGELH. Basic residues predominate over residues 7 to 16; sequence KKSRSKRGMR. Residues 21–31 are compositionally biased toward polar residues; sequence ALSTAQLSVDA.

Belongs to the bacterial ribosomal protein bL32 family.

The chain is Large ribosomal subunit protein bL32 from Shewanella pealeana (strain ATCC 700345 / ANG-SQ1).